Reading from the N-terminus, the 943-residue chain is Lysine-specific demethylase JMJ21 (943 aa).

An F-box domain is found at 14 to 60 (LGSLSVLPDETICVLLEYLAPRDIAHLACVSSVMYILCNEEPLWMSL). Residues 216-379 (EAAPELLKDY…FVCLDMAPGY (164 aa)) form the JmjC domain. Positions 262, 264, and 347 each coordinate Fe cation. A compositionally biased stretch (acidic residues) spans 396-410 (NSEDLEEETHDEEDN). The interval 396–438 (NSEDLEEETHDEEDNTLSYSDLTRKEKRTRMNGGGETENREED) is disordered.

This sequence belongs to the JARID1 histone demethylase family. Fe(2+) is required as a cofactor. Mostly expressed in leaves, and, to a lower extent, in inflorescences, roots, siliques and stems.

The protein localises to the nucleus. Functionally, may function as histone H3 lysine demethylase and be involved in regulation of gene expression. The protein is Lysine-specific demethylase JMJ21 of Arabidopsis thaliana (Mouse-ear cress).